Reading from the N-terminus, the 319-residue chain is D-ribose/D-allose-binding protein (319 aa).

Residues 1 to 29 (MKRVASRRLLAAVVLTACSSFLPLSAVHA) form the signal peptide.

It belongs to the bacterial solute-binding protein 2 family.

It is found in the periplasm. Functionally, binds specifically both D-ribose and D-allose, with affinities in the lower micromolar range. The polypeptide is D-ribose/D-allose-binding protein (Pseudomonas aeruginosa (strain ATCC 15692 / DSM 22644 / CIP 104116 / JCM 14847 / LMG 12228 / 1C / PRS 101 / PAO1)).